A 101-amino-acid chain; its full sequence is Small ribosomal subunit protein uS10 (101 aa).

Belongs to the universal ribosomal protein uS10 family. In terms of assembly, part of the 30S ribosomal subunit.

Involved in the binding of tRNA to the ribosomes. This chain is Small ribosomal subunit protein uS10, found in Ureaplasma parvum serovar 3 (strain ATCC 27815 / 27 / NCTC 11736).